We begin with the raw amino-acid sequence, 429 residues long: Phosphoribosylamine--glycine ligase (429 aa).

Residues 109–316 form the ATP-grasp domain; the sequence is KDFLARHQIP…LVDLCLAACD (208 aa). 135–196 serves as a coordination point for ATP; the sequence is LREKGAPIVI…EEFLDGEEAS (62 aa). Mg(2+) contacts are provided by E286 and N288.

The protein belongs to the GARS family. Monomer. Requires Mg(2+) as cofactor. It depends on Mn(2+) as a cofactor.

It carries out the reaction 5-phospho-beta-D-ribosylamine + glycine + ATP = N(1)-(5-phospho-beta-D-ribosyl)glycinamide + ADP + phosphate + H(+). Its pathway is purine metabolism; IMP biosynthesis via de novo pathway; N(1)-(5-phospho-D-ribosyl)glycinamide from 5-phospho-alpha-D-ribose 1-diphosphate: step 2/2. This Salmonella typhimurium (strain LT2 / SGSC1412 / ATCC 700720) protein is Phosphoribosylamine--glycine ligase.